Reading from the N-terminus, the 168-residue chain is Probable chorismate pyruvate-lyase (168 aa).

Substrate-binding residues include Arg75, Ile114, and Glu155.

Belongs to the UbiC family.

The protein localises to the cytoplasm. The enzyme catalyses chorismate = 4-hydroxybenzoate + pyruvate. It participates in cofactor biosynthesis; ubiquinone biosynthesis. Functionally, removes the pyruvyl group from chorismate, with concomitant aromatization of the ring, to provide 4-hydroxybenzoate (4HB) for the ubiquinone pathway. In Psychrobacter arcticus (strain DSM 17307 / VKM B-2377 / 273-4), this protein is Probable chorismate pyruvate-lyase.